The sequence spans 114 residues: UPF0145 protein PYRAB04900 (114 aa).

It belongs to the UPF0145 family.

The polypeptide is UPF0145 protein PYRAB04900 (Pyrococcus abyssi (strain GE5 / Orsay)).